The chain runs to 207 residues: MGGKWSKSSLVGWPAIRERIRKTDPAADGVGAVSRDLEKHGAITSSNTASTNDTCAWLEAQEESEEVGFPVRPQVPLRPMTYKEAVDLSHFLKEKGGLEGLIWSKKRQEILDLWVYNTQGIFPDWQNYTPGPGIRYPLTFGWCFQLVPVDPQEVEEATEREDNCLLHPMCQQGMEDPERQVLMWRFNSRLALEHKARELHPEFYKDC.

A lipid anchor (N-myristoyl glycine; by host) is attached at Gly2. Ser6 carries the post-translational modification Phosphoserine; by host. The segment at 62–66 is acidic; interacts with host PACS1 and PACS2; stabilizes the interaction of NEF/MHC-I with host AP1M1; necessary for MHC-I internalization; that stretch reads EESEE. Residues 70–79 form an SH3-binding; interaction with Src family tyrosine kinases region; it reads PVRPQVPLRP. Positions 73–76 match the PxxP; stabilizes the interaction of NEF/MHC-I with host AP1M1; necessary for MHC-I internalization motif; sequence PQVP. A mediates dimerization, Nef-PTE1 interaction region spans residues 109–125; the sequence is EILDLWVYNTQGIFPDW. Residues 149–181 are binding to ATP6V1H; the sequence is VDPQEVEEATEREDNCLLHPMCQQGMEDPERQV. The Dileucine internalization motif; necessary for CD4 internalization motif lies at 165–166; it reads LL. Positions 175–176 match the Diacidic; necessary for CD4 internalization motif; sequence ED.

This sequence belongs to the lentivirus primate group Nef protein family. As to quaternary structure, monomer; cytosolic form. Homodimer; membrane bound form. Interacts with Nef associated p21-activated kinase (PAK2); this interaction activates PAK2. Associates with the Nef-MHC-I-AP1 complex; this complex is required for MHC-I internalization. Interacts (via C-terminus) with host PI3-kinase. Interacts with host PACS1; this interaction seems to be weak. Interacts with host PACS2. Interacts with host LCK and MAPK3; these interactions inhibit the kinase activity of the latter. Interacts with host ATP6V1H; this interaction may play a role in CD4 endocytosis. Associates with the CD4-Nef-AP2 complex; this complex is required for CD4 internalization. Interacts with host AP2 subunit alpha and AP2 subunit sigma2. Interacts with TCR-zeta chain; this interaction up-regulates the Fas ligand (FasL) surface expression. Interacts with host HCK, LYN, and SRC; these interactions activate the Src family kinases. Interacts with MAP3K5; this interaction inhibits the Fas and TNFR-mediated death signals. Interacts with beta-COP and PTE1. Interacts with human RACK1; this increases Nef phosphorylation by PKC. Interacts with TP53; this interaction decreases the half-life of TP53, protecting the infected cell against p53-mediated apoptosis. Post-translationally, the virion-associated Nef proteins are cleaved by the viral protease to release the soluble C-terminal core protein. Nef is probably cleaved concomitantly with viral structural proteins on maturation of virus particles. In terms of processing, myristoylated. Phosphorylated on serine residues, probably by host PKCdelta and theta.

The protein localises to the host cell membrane. Its subcellular location is the virion. It localises to the secreted. The protein resides in the host Golgi apparatus membrane. Its function is as follows. Factor of infectivity and pathogenicity, required for optimal virus replication. Alters numerous pathways of T-lymphocyte function and down-regulates immunity surface molecules in order to evade host defense and increase viral infectivity. Alters the functionality of other immunity cells, like dendritic cells, monocytes/macrophages and NK cells. In terms of biological role, in infected CD4(+) T-lymphocytes, down-regulates the surface MHC-I, mature MHC-II, CD4, CD28, CCR5 and CXCR4 molecules. Mediates internalization and degradation of host CD4 through the interaction of with the cytoplasmic tail of CD4, the recruitment of AP-2 (clathrin adapter protein complex 2), internalization through clathrin coated pits, and subsequent transport to endosomes and lysosomes for degradation. Diverts host MHC-I molecules to the trans-Golgi network-associated endosomal compartments by an endocytic pathway to finally target them for degradation. MHC-I down-regulation may involve AP-1 (clathrin adapter protein complex 1) or possibly Src family kinase-ZAP70/Syk-PI3K cascade recruited by PACS2. In consequence infected cells are masked for immune recognition by cytotoxic T-lymphocytes. Decreasing the number of immune receptors also prevents reinfection by more HIV particles (superinfection). Down-regulates host SERINC3 and SERINC5 thereby excluding these proteins from the viral particles. Virion infectivity is drastically higher when SERINC3 or SERINC5 are excluded from the viral envelope, because these host antiviral proteins impair the membrane fusion event necessary for subsequent virion penetration. Functionally, bypasses host T-cell signaling by inducing a transcriptional program nearly identical to that of anti-CD3 cell activation. Interaction with TCR-zeta chain up-regulates the Fas ligand (FasL). Increasing surface FasL molecules and decreasing surface MHC-I molecules on infected CD4(+) cells send attacking cytotoxic CD8+ T-lymphocytes into apoptosis. Plays a role in optimizing the host cell environment for viral replication without causing cell death by apoptosis. Protects the infected cells from apoptosis in order to keep them alive until the next virus generation is ready to strike. Inhibits the Fas and TNFR-mediated death signals by blocking MAP3K5/ASK1. Decreases the half-life of TP53, protecting the infected cell against p53-mediated apoptosis. Inhibits the apoptotic signals regulated by the Bcl-2 family proteins through the formation of a Nef/PI3-kinase/PAK2 complex that leads to activation of PAK2 and induces phosphorylation of host BAD. Its function is as follows. Extracellular Nef protein targets CD4(+) T-lymphocytes for apoptosis by interacting with CXCR4 surface receptors. In Human immunodeficiency virus type 1 group M subtype D (isolate NDK) (HIV-1), this protein is Protein Nef.